A 566-amino-acid chain; its full sequence is MKVITCEIAWHNKEPVYSLDFQHGTDGKINRLASAGVDTAVRVWKVEKGPDGKAIVEFLSNLARHTKAVNVVRFSPSGEVLASGGDDAVILLWKLNDSKELEPLAFQDEDEAQLNKENWTVVKTLRGHLEDVYDICWTSDGNYMASASVDNTAIMWDVVKGQKVSILNEHKSYVQGITWDPLGQYIATLSCDRVLRVYNTQTKRVAFNVTKMPSESGAEGEARSYRMFHDDSMKSFFRRLSFTPDGSLLLTPAGCVESGENVTNTTYVFSRNNLKRPMGHLPCPGKATLAVRCCPVYFELRQALNKGEVSQKSSPALLNLPYRLVFAVASEDSVLFYDTEQSFPFGYVSNIHYHTLSDISWSSDGAFLAISSTDGYCSFVTFEKDELGIPLKEKPQIHVRTSVVTEKKVKKSQPNKVISPGSRLTEGTSLSTPTLQPKTPVAAAKDLPSTPVGIKNVPVSSSEERKISQPASQSTKVNQPRRITLNTLQAWSKTPRRVNLIPLKPDTPASVYTDTVPVPPSSEQEHERPLPSGDSLQNPPASKRPRTEEMPLSVSAEDQIGCKPNK.

6 WD repeats span residues 11-54 (HNKE…DGKA), 64-103 (RHTKAVNVVRFSPSGEVLASGGDDAVILLWKLNDSKELEP), 127-166 (GHLEDVYDICWTSDGNYMASASVDNTAIMWDVVKGQKVSI), 169-208 (EHKSYVQGITWDPLGQYIATLSCDRVLRVYNTQTKRVAFN), 228-279 (FHDD…RPMG), and 351-392 (IHYH…IPLK). Disordered stretches follow at residues 411–481 (KSQP…NQPR) and 501–566 (IPLK…KPNK). Composition is skewed to polar residues over residues 425-437 (TEGTSLSTPTLQP) and 469-478 (QPASQSTKVN).

Belongs to the WD repeat HIR1 family. In terms of assembly, interacts with CHAF1A.

It localises to the nucleus. Its function is as follows. Acts as a component of the histone chaperone complex chromatin assembly factor 1 (CAF-1), which assembles histone octamers onto DNA during replication and repair. CAF-1 performs the first step of the nucleosome assembly process, bringing newly synthesized histones H3 and H4 to replicating DNA; histones H2A/H2B can bind to this chromatin precursor subsequent to DNA replication to complete the histone octamer. The sequence is that of Chromatin assembly factor 1 subunit B (CHAF1B) from Gallus gallus (Chicken).